A 1320-amino-acid polypeptide reads, in one-letter code: Sal-like protein 3 (1320 aa).

The segment covering 1–11 (MSRRKQAKPQH) has biased composition (basic residues). The interval 1–49 (MSRRKQAKPQHLKSDEELPPQDGASEHGVPGDGAEDADSGSESRSGSEE) is disordered. The span at 40 to 49 (GSESRSGSEE) shows a compositional bias: low complexity. The C2H2-type 1; atypical zinc finger occupies 51 to 73 (SVCEKCCAEFFKWADFLQHKKTC). Disordered stretches follow at residues 84–166 (DDEP…AFSM) and 271–367 (LSAG…NLPN). Pro residues predominate over residues 88-100 (APPSEDFPEPSPA). Position 109 is a phosphoserine (S109). The span at 121–131 (SEVKAATKEAE) shows a compositional bias: basic and acidic residues. The segment covering 143-160 (PPGPSVPPPPPALPPQPE) has biased composition (pro residues). Residues 271-289 (LSAGPATASAGSGSTLPAA) are compositionally biased toward low complexity. Positions 295–311 (HLSQPASGTSTPCSTSA) are enriched in polar residues. Low complexity-rich tracts occupy residues 323–342 (STGP…GNAV) and 355–367 (PGPL…NLPN). 2 consecutive C2H2-type zinc fingers follow at residues 427 to 449 (HKCR…LRSH) and 455 to 477 (FKCN…FQRH). Residues 534 to 623 (GLQLPPTVPG…RTGDAPVVGG (90 aa)) form a disordered region. A compositionally biased stretch (polar residues) spans 543–554 (GTHNYTDSPSIT). Residues 555–568 (PVSRSPQRPSPASS) show a composition bias toward low complexity. A compositionally biased stretch (polar residues) spans 569–583 (ECTSLSPGLNNTESG). C2H2-type zinc fingers lie at residues 692-714 (NQCV…YRTH), 720-742 (FKCK…FGVH), and 752-774 (HSCP…IRMH). Disordered regions lie at residues 807–846 (SSFD…PPSP) and 878–972 (VENG…GHPG). The span at 809–823 (FDDDIDENSMEEDSE) shows a compositional bias: acidic residues. Composition is skewed to low complexity over residues 834 to 846 (PLLS…PPSP) and 902 to 923 (RSAG…PAHS). At S932 the chain carries Phosphoserine. 4 C2H2-type zinc fingers span residues 997–1019 (TVCG…YRSH), 1025–1047 (FVCT…LLTH), 1133–1155 (HNCQ…ERTH), and 1161–1183 (FGCT…MGTH). The residue at position 1197 (S1197) is a Phosphoserine.

It belongs to the sal C2H2-type zinc-finger protein family. In adult brain, testis and kidney. In lower levels also in adult ovaries and embryonic stem cells. In embryo in developing neuroectoderm of brain, inner ear and spinal cord. Also weakly and transiently expressed in embryonic branchial arches, notochord, limb buds and heart.

It is found in the nucleus. Functionally, probable transcription factor. The polypeptide is Sal-like protein 3 (Sall3) (Mus musculus (Mouse)).